The following is a 260-amino-acid chain: Membrane protein insertase YidC 1 (260 aa).

A signal peptide spans 1-22 (MLKSYRAVLVSLSLLLVFVLSG). Cys-23 carries N-palmitoyl cysteine lipidation. Residue Cys-23 is the site of S-diacylglycerol cysteine attachment. 5 helical membrane passes run 29–49 (IDAH…SFMI), 52–72 (VAHH…TLVI), 133–153 (LAGC…YYAI), 164–184 (FLWV…IAAL), and 213–233 (MPAM…LYWI).

The protein belongs to the OXA1/ALB3/YidC family. Type 2 subfamily.

It localises to the cell membrane. In terms of biological role, required for the insertion and/or proper folding and/or complex formation of integral membrane proteins into the membrane. Involved in integration of membrane proteins that insert both dependently and independently of the Sec translocase complex, as well as at least some lipoproteins. In Bacillus anthracis, this protein is Membrane protein insertase YidC 1.